Consider the following 375-residue polypeptide: 2-heptyl-3-hydroxy-4(1H)-quinolone synthase (375 aa).

This sequence belongs to the 3-hydroxybenzoate 6-hydroxylase family.

The enzyme catalyses 2-heptyl-4(1H)-quinolone + NADH + O2 + H(+) = 2-heptyl-3-hydroxy-4(1H)-quinolone + NAD(+) + H2O. In terms of biological role, involved in the degradation pathway of the Pseudomonas aeruginosa quorum sensing signal molecule HHQ (2-heptyl-4(1H)-quinolone) to anthranilate. Catalyzes the hydroxylation of HHQ to PQS (2-heptyl-3-hydroxy-4(1H)-quinolone). This Mycobacteroides abscessus (strain ATCC 19977 / DSM 44196 / CCUG 20993 / CIP 104536 / JCM 13569 / NCTC 13031 / TMC 1543 / L948) (Mycobacterium abscessus) protein is 2-heptyl-3-hydroxy-4(1H)-quinolone synthase.